A 62-amino-acid chain; its full sequence is Large ribosomal subunit protein bL32m (62 aa).

Belongs to the bacterial ribosomal protein bL32 family.

The protein resides in the mitochondrion. The chain is Large ribosomal subunit protein bL32m (RPL32) from Reclinomonas americana.